We begin with the raw amino-acid sequence, 109 residues long: ATP-dependent Clp protease adapter protein ClpS 2 (109 aa).

Residues 1–24 (MAGDGGRSGPSTPSTSVITKTKPR) are disordered.

It belongs to the ClpS family. As to quaternary structure, binds to the N-terminal domain of the chaperone ClpA.

Involved in the modulation of the specificity of the ClpAP-mediated ATP-dependent protein degradation. This Rhodopseudomonas palustris (strain ATCC BAA-98 / CGA009) protein is ATP-dependent Clp protease adapter protein ClpS 2.